A 393-amino-acid chain; its full sequence is Putative bacilysin exporter BacE (393 aa).

Transmembrane regions (helical) follow at residues 11-31 (LLFG…ALLI), 43-63 (SGVI…GVLV), 69-89 (VKIM…LTFL), 92-112 (GEYP…GVFF), 133-155 (LFAK…FLLG), 160-177 (LAVA…FFIS), 215-235 (MFTM…FPIV), 244-264 (IGNF…AALV), 287-307 (ALFL…LFFI), and 353-373 (IVDA…LFLH).

This sequence belongs to the major facilitator superfamily.

Its subcellular location is the cell membrane. Its function is as follows. Part of the bacilysin biosynthesis operon. May be involved in self-resistance to bacilysin by permitting efflux of this antibiotic. This Bacillus amyloliquefaciens (Bacillus velezensis) protein is Putative bacilysin exporter BacE (bacE).